The primary structure comprises 59 residues: Three-finger toxin MS1 (59 aa).

Cystine bridges form between C3–C22, C17–C39, C41–C52, and C53–C58.

Belongs to the three-finger toxin family. Short-chain subfamily. Type I alpha-neurotoxin sub-subfamily. In terms of tissue distribution, expressed by the venom gland.

Its subcellular location is the secreted. Functionally, produces peripheral paralysis by blocking neuromuscular transmission at the postsynaptic site. Binds to and inhibits the endogenous nicotinic acetylcholine receptors (nAChR) in human rhabdomyosarcoma TE 671 cell line with an IC(50) of 48.2 mM. This neurotoxin is lethal to mice by intraperitoneal injection and to zebrafish by injection at the back of the dorsolateral region. In Micrurus surinamensis (Surinam coral snake), this protein is Three-finger toxin MS1.